Consider the following 132-residue polypeptide: Myelin P2 protein (132 aa).

N-acetylserine is present on serine 2. (9Z)-octadecenoate is bound by residues arginine 107 and 127 to 129; that span reads RIY. Residues arginine 107 and 127-129 contribute to the hexadecanoate site; that span reads RIY.

Belongs to the calycin superfamily. Fatty-acid binding protein (FABP) family. Monomer.

The protein resides in the cytoplasm. May play a role in lipid transport protein in Schwann cells. May bind cholesterol. This chain is Myelin P2 protein (Pmp2), found in Mus musculus (Mouse).